The following is a 326-amino-acid chain: Phenylalanine--tRNA ligase alpha subunit (326 aa).

Glutamate 251 is a binding site for Mg(2+).

It belongs to the class-II aminoacyl-tRNA synthetase family. Phe-tRNA synthetase alpha subunit type 1 subfamily. In terms of assembly, tetramer of two alpha and two beta subunits. Requires Mg(2+) as cofactor.

The protein localises to the cytoplasm. It catalyses the reaction tRNA(Phe) + L-phenylalanine + ATP = L-phenylalanyl-tRNA(Phe) + AMP + diphosphate + H(+). The sequence is that of Phenylalanine--tRNA ligase alpha subunit from Idiomarina loihiensis (strain ATCC BAA-735 / DSM 15497 / L2-TR).